The following is a 157-amino-acid chain: Small ribosomal subunit protein uS9 (157 aa).

The protein belongs to the universal ribosomal protein uS9 family.

The chain is Small ribosomal subunit protein uS9 from Caulobacter sp. (strain K31).